The sequence spans 284 residues: NAD kinase (284 aa).

Asp-70 functions as the Proton acceptor in the catalytic mechanism. NAD(+) contacts are provided by residues 70–71 (DG), 139–140 (NE), Lys-167, Asp-169, Leu-177, 180–185 (TAYNLS), and Gln-236.

It belongs to the NAD kinase family. A divalent metal cation serves as cofactor.

The protein resides in the cytoplasm. The catalysed reaction is NAD(+) + ATP = ADP + NADP(+) + H(+). Its function is as follows. Involved in the regulation of the intracellular balance of NAD and NADP, and is a key enzyme in the biosynthesis of NADP. Catalyzes specifically the phosphorylation on 2'-hydroxyl of the adenosine moiety of NAD to yield NADP. The chain is NAD kinase from Helicobacter pylori (strain J99 / ATCC 700824) (Campylobacter pylori J99).